The sequence spans 311 residues: MQRPGPFSTLYGRVLAPLPGRAGGAASGGGGNSWDLPGSHVRLPGRAQSGTRGGAGNTSTSCGDSNSICPAPSTMSKAEEAKKLAGRAAVENHVRNNQVLGIGSGSTIVHAVQRIAERVKQENLNLVCIPTSFQARQLILQYGLTLSDLDRHPEIDLAIDGADEVDADLNLIKGGGGCLTQEKIVAGYASRFIVIADFRKDSKNLGDQWHKGIPIEVIPMAYVPVSRAVSQKFGGVVELRMAVNKAGPVVTDNGNFILDWKFDRVHKWSEVNTAIKMIPGVVDTGLFINMAERVYFGMQDGSVNMREKPFC.

Residues 22-32 (AGGAASGGGGN) are compositionally biased toward gly residues. The segment at 22 to 67 (AGGAASGGGGNSWDLPGSHVRLPGRAQSGTRGGAGNTSTSCGDSNS) is disordered. Omega-N-methylarginine is present on Arg-52. Residues 57–67 (NTSTSCGDSNS) show a composition bias toward polar residues. Phosphoserine is present on Ser-106.

It belongs to the ribose 5-phosphate isomerase family.

It catalyses the reaction aldehydo-D-ribose 5-phosphate = D-ribulose 5-phosphate. The protein operates within carbohydrate degradation; pentose phosphate pathway; D-ribose 5-phosphate from D-ribulose 5-phosphate (non-oxidative stage): step 1/1. Functionally, catalyzes the reversible conversion of ribose-5-phosphate to ribulose 5-phosphate and participates in the first step of the non-oxidative branch of the pentose phosphate pathway. The polypeptide is Ribose-5-phosphate isomerase (Homo sapiens (Human)).